We begin with the raw amino-acid sequence, 318 residues long: L-lactate dehydrogenase (318 aa).

NAD(+) is bound by residues valine 15, aspartate 36, and lysine 41. Arginine 89 is a binding site for substrate. NAD(+) is bound by residues serine 102, 119-121 (ITN), and threonine 144. Residue 121-124 (NPVD) coordinates substrate. A substrate-binding site is contributed by 149 to 152 (DSAR). Histidine 176 (proton acceptor) is an active-site residue. Threonine 231 is a binding site for substrate.

This sequence belongs to the LDH/MDH superfamily. LDH family. In terms of assembly, homotetramer.

It is found in the cytoplasm. The enzyme catalyses (S)-lactate + NAD(+) = pyruvate + NADH + H(+). Its pathway is fermentation; pyruvate fermentation to lactate; (S)-lactate from pyruvate: step 1/1. Catalyzes the conversion of lactate to pyruvate. The polypeptide is L-lactate dehydrogenase (Fusobacterium nucleatum subsp. nucleatum (strain ATCC 25586 / DSM 15643 / BCRC 10681 / CIP 101130 / JCM 8532 / KCTC 2640 / LMG 13131 / VPI 4355)).